A 690-amino-acid chain; its full sequence is Elongation factor G (690 aa).

The 275-residue stretch at 8 to 282 folds into the tr-type G domain; that stretch reads DKVRNIGIMA…AIVNYLPSPL (275 aa). GTP-binding positions include 17 to 24, 81 to 85, and 135 to 138; these read AHIDAGKT, DTPGH, and NKMD.

It belongs to the TRAFAC class translation factor GTPase superfamily. Classic translation factor GTPase family. EF-G/EF-2 subfamily.

It localises to the cytoplasm. Its function is as follows. Catalyzes the GTP-dependent ribosomal translocation step during translation elongation. During this step, the ribosome changes from the pre-translocational (PRE) to the post-translocational (POST) state as the newly formed A-site-bound peptidyl-tRNA and P-site-bound deacylated tRNA move to the P and E sites, respectively. Catalyzes the coordinated movement of the two tRNA molecules, the mRNA and conformational changes in the ribosome. This Caldanaerobacter subterraneus subsp. tengcongensis (strain DSM 15242 / JCM 11007 / NBRC 100824 / MB4) (Thermoanaerobacter tengcongensis) protein is Elongation factor G.